We begin with the raw amino-acid sequence, 269 residues long: 4-hydroxy-tetrahydrodipicolinate reductase (269 aa).

NAD(+) contacts are provided by residues 8-13 (GAAGRM), Glu-34, 98-100 (GTT), and 122-125 (APNY). The active-site Proton donor/acceptor is the His-155. Residue His-156 coordinates (S)-2,3,4,5-tetrahydrodipicolinate. The active-site Proton donor is Lys-159. Residue 165-166 (GT) participates in (S)-2,3,4,5-tetrahydrodipicolinate binding.

Belongs to the DapB family.

Its subcellular location is the cytoplasm. It carries out the reaction (S)-2,3,4,5-tetrahydrodipicolinate + NAD(+) + H2O = (2S,4S)-4-hydroxy-2,3,4,5-tetrahydrodipicolinate + NADH + H(+). The enzyme catalyses (S)-2,3,4,5-tetrahydrodipicolinate + NADP(+) + H2O = (2S,4S)-4-hydroxy-2,3,4,5-tetrahydrodipicolinate + NADPH + H(+). It participates in amino-acid biosynthesis; L-lysine biosynthesis via DAP pathway; (S)-tetrahydrodipicolinate from L-aspartate: step 4/4. Its function is as follows. Catalyzes the conversion of 4-hydroxy-tetrahydrodipicolinate (HTPA) to tetrahydrodipicolinate. This Aliivibrio salmonicida (strain LFI1238) (Vibrio salmonicida (strain LFI1238)) protein is 4-hydroxy-tetrahydrodipicolinate reductase.